We begin with the raw amino-acid sequence, 136 residues long: Large ribosomal subunit protein bL19 (136 aa).

This sequence belongs to the bacterial ribosomal protein bL19 family.

This protein is located at the 30S-50S ribosomal subunit interface and may play a role in the structure and function of the aminoacyl-tRNA binding site. The sequence is that of Large ribosomal subunit protein bL19 from Xylella fastidiosa (strain 9a5c).